Reading from the N-terminus, the 147-residue chain is MADFEMVLKHWGPVEADYATHGNLVLTRLFTEHPETQKLFPKFAGIAKADMAGNAAISAHGATVLKKLGELLKAKGSHAAIIKPMANSHATKHKIPIKNFELISEVIGKVMHEKAGLDAAGQKALKNVMTTIIADIEANYKELGFTG.

The Globin domain occupies 2–137 (ADFEMVLKHW…VMTTIIADIE (136 aa)). Histidine 60 serves as a coordination point for nitrite. O2 is bound at residue histidine 60. Heme b is bound at residue histidine 89.

It belongs to the globin family. In terms of assembly, monomeric.

It localises to the cytoplasm. It is found in the sarcoplasm. The enzyme catalyses Fe(III)-heme b-[protein] + nitric oxide + H2O = Fe(II)-heme b-[protein] + nitrite + 2 H(+). It catalyses the reaction H2O2 + AH2 = A + 2 H2O. Monomeric heme protein which primary function is to store oxygen and facilitate its diffusion within muscle tissues. Reversibly binds oxygen through a pentacoordinated heme iron and enables its timely and efficient release as needed during periods of heightened demand. Depending on the oxidative conditions of tissues and cells, and in addition to its ability to bind oxygen, it also has a nitrite reductase activity whereby it regulates the production of bioactive nitric oxide. Under stress conditions, like hypoxia and anoxia, it also protects cells against reactive oxygen species thanks to its pseudoperoxidase activity. The chain is Myoglobin (mb) from Makaira nigricans (Atlantic blue marlin).